A 474-amino-acid polypeptide reads, in one-letter code: Lipoprotein lipase (474 aa).

Positions 1–27 (MESKALLLVALGVWLQSLTAFRGGVAA) are cleaved as a signal peptide. Residues 32–53 (RDFSDIESKFALRTPEDTAEDT) form an interaction with GPIHBP1 region. The cysteines at positions 54 and 67 are disulfide-linked. N-linked (GlcNAc...) asparagine glycosylation is present at N70. Y121 bears the 3'-nitrotyrosine mark. S159 (nucleophile) is an active-site residue. The active-site Charge relay system is D183. Y191 carries the post-translational modification 3'-nitrotyrosine. Ca(2+) is bound by residues A194, R197, S199, and D202. C243 and C266 are disulfide-bonded. Residues 243 to 266 (CNIGEAIRVIAEKGLGDVDQLVKC) are essential for determining substrate specificity. H268 (charge relay system) is an active-site residue. Disulfide bonds link C291/C310 and C302/C305. A PLAT domain is found at 341 to 464 (FHYQVKIHFS…KGKDAAVFVK (124 aa)). Y343 carries the 3'-nitrotyrosine modification. N386 is a glycosylation site (N-linked (GlcNAc...) asparagine). Residues 417-421 (WSDWW) form an important for interaction with lipoprotein particles region. Residues 430 to 434 (KIRVK) are important for heparin binding. The interaction with GPIHBP1 stretch occupies residues 443–467 (IFCAREKVSHLQKGKDAAVFVKCHD). A disulfide bridge links C445 with C465.

It belongs to the AB hydrolase superfamily. Lipase family. As to quaternary structure, homodimer. Interacts with GPIHBP1 with 1:1 stoichiometry. Interacts with APOC2; the interaction activates LPL activity in the presence of lipids. Interaction with heparan sulfate proteoglycans is required to protect LPL against loss of activity. Associates with lipoprotein particles in blood plasma. Interacts with LMF1 and SEL1L; interaction with SEL1L is required to prevent aggregation of newly synthesized LPL in the endoplasmic reticulum (ER), and for normal export of LPL from the ER to the extracellular space. Interacts with SORL1; SORL1 acts as a sorting receptor, promoting LPL localization to endosomes and later to lysosomes, leading to degradation of newly synthesized LPL. In terms of processing, tyrosine nitration after lipopolysaccharide (LPS) challenge down-regulates the lipase activity.

It is found in the cell membrane. It localises to the secreted. The protein localises to the extracellular space. Its subcellular location is the extracellular matrix. It carries out the reaction a triacylglycerol + H2O = a diacylglycerol + a fatty acid + H(+). The catalysed reaction is a 1,2-diacyl-sn-glycero-3-phosphocholine + H2O = a 2-acyl-sn-glycero-3-phosphocholine + a fatty acid + H(+). The enzyme catalyses 1,2,3-tri-(9Z-octadecenoyl)-glycerol + H2O = di-(9Z)-octadecenoylglycerol + (9Z)-octadecenoate + H(+). It catalyses the reaction 1,2-di-(9Z-octadecenoyl)-sn-glycero-3-phosphocholine + H2O = (9Z-octadecenoyl)-sn-glycero-3-phosphocholine + (9Z)-octadecenoate + H(+). It carries out the reaction 1,2,3-tributanoylglycerol + H2O = dibutanoylglycerol + butanoate + H(+). The catalysed reaction is 1,2-dihexadecanoyl-sn-glycero-3-phosphocholine + H2O = hexadecanoyl-sn-glycero-3-phosphocholine + hexadecanoate + H(+). Its activity is regulated as follows. The apolipoprotein APOC2 acts as a coactivator of LPL activity. Ca(2+) binding promotes protein stability and formation of the active homodimer. Interaction with GPIHBP1 protects LPL against inactivation by ANGPTL4. Key enzyme in triglyceride metabolism. Catalyzes the hydrolysis of triglycerides from circulating chylomicrons and very low density lipoproteins (VLDL), and thereby plays an important role in lipid clearance from the blood stream, lipid utilization and storage. Although it has both phospholipase and triglyceride lipase activities it is primarily a triglyceride lipase with low but detectable phospholipase activity. Mediates margination of triglyceride-rich lipoprotein particles in capillaries. Recruited to its site of action on the luminal surface of vascular endothelium by binding to GPIHBP1 and cell surface heparan sulfate proteoglycans. In Rattus norvegicus (Rat), this protein is Lipoprotein lipase (Lpl).